A 183-amino-acid polypeptide reads, in one-letter code: RNA pyrophosphohydrolase (183 aa).

A Nudix hydrolase domain is found at 6 to 149 (GYRPNVGIIL…KREVYRLALE (144 aa)). The Nudix box signature appears at 38–59 (GGINAGETPEQAMFRELEEEVG).

The protein belongs to the Nudix hydrolase family. RppH subfamily. A divalent metal cation is required as a cofactor.

Accelerates the degradation of transcripts by removing pyrophosphate from the 5'-end of triphosphorylated RNA, leading to a more labile monophosphorylated state that can stimulate subsequent ribonuclease cleavage. The protein is RNA pyrophosphohydrolase of Thiobacillus denitrificans (strain ATCC 25259 / T1).